The following is a 314-amino-acid chain: MEGVELKEEWQDEDFPIPLPEDDSIEADILAITGPEDQPGSLEVNGNKVRKKLMAPDISLTLDPSDGSVLSDDLDESGEIDLDGLDTPSENSNEFEWEDDLPKPKTTEVIRKGSITEYTAAEEKEDGRRWRMFRIGEQDHRVDMKAIEPYKKVISHGGYYGDGLNAIVVFAVCFMPESSQPNYRYLMDNLFKYVIGTLELLVAENYMIVYLNGATTRRKMPSLGWLRKCYQQIDRRLRKNLKSLIIVHPSWFIRTLLAVTRPFISSKFSQKIRYVFNLAELAELVPMEYVGIPECIKQVDQELNGKQDEPKNEQ.

The disordered stretch occupies residues 1-21 (MEGVELKEEWQDEDFPIPLPE). The span at 10 to 21 (WQDEDFPIPLPE) shows a compositional bias: acidic residues. A phosphoserine mark is found at Ser41 and Ser77. The interval 76–100 (ESGEIDLDGLDTPSENSNEFEWEDD) is disordered. Thr87 is subject to Phosphothreonine. 3 positions are modified to phosphoserine: Ser89, Ser92, and Ser114. Residues 147–304 (IEPYKKVISH…CIKQVDQELN (158 aa)) enclose the CRAL-TRIO domain.

It localises to the cytoplasm. The protein resides in the perinuclear region. Implicated in the suppression of cell death. Interacts with the BCL-2 and adenovirus E1B 19 kDa proteins. The chain is BCL2/adenovirus E1B 19 kDa protein-interacting protein 2 (BNIP2) from Homo sapiens (Human).